A 383-amino-acid polypeptide reads, in one-letter code: Adaptive-response sensory kinase SasA (383 aa).

The Histidine kinase domain maps to 152 to 365; that stretch reads MVAHELRTPL…CFTFNVPIWQ (214 aa). H155 is subject to Phosphohistidine; by autocatalysis.

In terms of assembly, homooligomerizes. Interacts with KaiC. Participates in the KaiABC clock complex, whose core is composed of a KaiC homohexamer, 6 KaiB and up to 6 KaiA dimers. SasA and KaiB(fs) compete to bind to KaiC.

The enzyme catalyses ATP + protein L-histidine = ADP + protein N-phospho-L-histidine.. Member of the two-component regulatory system SasA/RpaA involved in genome-wide circadian gene expression. One of several clock output pathways. Participates in the Kai clock protein complex, the main circadian regulator in cyanobacteria, via its interaction with KaiC. KaiC enhances the autophosphorylation activity of SasA, which then transfers its phosphate group to RpaA to activate it. In addition to its output function, recruits fold-shifted KaiB (KaiB(fs)) to KaiC to cooperatively form the KaiB(6):KaiC(6) complex (independent of SasA kinase activity). Required for robustness of the circadian rhythm of gene expression and is involved in clock output, also required for adaptation to light/dark cycles. The polypeptide is Adaptive-response sensory kinase SasA (Synechococcus sp. (strain CC9311)).